Consider the following 84-residue polypeptide: U4-theraphotoxin-Hhn1aa (84 aa).

An N-terminal signal peptide occupies residues 1 to 22 (MKVTLIAILTCAAVLVLHTTAA). The propeptide occupies 23 to 47 (EELEESQLMEVGMPDTELAAVDEER). 2 cysteine pairs are disulfide-bonded: cysteine 51/cysteine 65 and cysteine 55/cysteine 76.

This sequence belongs to the neurotoxin 12 (Hwtx-2) family. 02 (Hwtx-2) subfamily. As to expression, expressed by the venom gland.

The protein resides in the secreted. In terms of biological role, postsynaptic neurotoxin. This Cyriopagopus hainanus (Chinese bird spider) protein is U4-theraphotoxin-Hhn1aa.